The sequence spans 605 residues: Dynein axonemal intermediate chain 2 (605 aa).

WD repeat units lie at residues 150 to 203 (KTIN…IWDL), 208 to 246 (KPEL…CWDT), 253 to 294 (AELS…WWDI), 301 to 347 (TEVV…SCNR), 355 to 393 (KIVC…IWSE), 399 to 437 (SIMW…IWDF), and 443 to 481 (DPTL…LLEV). The interval 568–605 (IKLTPVPQQPSPEEDQVVEEGEEAAGEEGDEEVEEDLA) is disordered. Residues 579-605 (PEEDQVVEEGEEAAGEEGDEEVEEDLA) show a composition bias toward acidic residues.

This sequence belongs to the dynein intermediate chain family. Consists of at least two heavy chains and a number of intermediate and light chains. Interacts with DNAAF2. Interacts with DNAAF6/PIH1D3. Interacts with HEATR2; probably involved in outer arm dynein assembly. Interacts with CFAP53. As to expression, highly expressed in trachea and testis. Expressed in respiratory ciliated cells (at protein level).

The protein localises to the cytoplasm. The protein resides in the cytoskeleton. It localises to the cilium axoneme. It is found in the dynein axonemal particle. Its function is as follows. Part of the dynein complex of respiratory cilia. This is Dynein axonemal intermediate chain 2 from Homo sapiens (Human).